The following is a 160-amino-acid chain: Putative UPF0479 protein YLR466C-A (160 aa).

2 consecutive transmembrane segments (helical) span residues 39-59 (IVFC…KVLQ) and 136-156 (VPMI…ISQH).

The protein belongs to the UPF0479 family.

The protein localises to the membrane. This is Putative UPF0479 protein YLR466C-A from Saccharomyces cerevisiae (strain ATCC 204508 / S288c) (Baker's yeast).